Consider the following 258-residue polypeptide: Spindlin-2 (258 aa).

A disordered region spans residues 1–47 (MKTPHKKATARQQTREIVDDHTLSASMRKKKISQKKQRGRPSSQTRR). The segment covering 13–22 (QTREIVDDHT) has biased composition (basic and acidic residues). A compositionally biased stretch (basic residues) spans 27–39 (MRKKKISQKKQRG). Tudor-like domain regions lie at residues 50-99 (VGCR…LELH), 129-178 (IGKA…YQLL), and 210-255 (IGKH…YDLV). Histone H3K4me3 and H3R8me2a binding stretches follow at residues glutamate 138 and 246–248 (DFH).

It belongs to the SPIN/STSY family. Interacts with C11orf84/SPINDOC.

It localises to the nucleus. In terms of biological role, may be involved in the regulation of cell cycle progression. Exhibits H3K4me3-binding activity. This chain is Spindlin-2 (SPIN2), found in Bos taurus (Bovine).